The chain runs to 371 residues: 4-hydroxyprotoasukamycin monooxygenase (371 aa).

The protein belongs to the bacterial luciferase oxidoreductase family. FMN is required as a cofactor.

The enzyme catalyses 4-hydroxyprotoasukamycin + NADH + O2 + H(+) = asukamycin + NAD(+) + H2O. Its pathway is antibiotic biosynthesis. In terms of biological role, involved in the biosynthesis of the antibiotic asukamycin. Catalyzes the epoxidation of 4-hydroxyprotoasukamycin to the final product, asukamycin. Can also convert some 4-hydroxyprotoasukamycin derivatives to their asukamycin derivatives, but cannot use protoasukamycin as substrate. Can also use NADPH, but catalytic efficiency is 20-fold higher with NADH. This Streptomyces nodosus subsp. asukaensis protein is 4-hydroxyprotoasukamycin monooxygenase.